The chain runs to 223 residues: Phosphoribosylformylglycinamidine synthase subunit PurQ (223 aa).

One can recognise a Glutamine amidotransferase type-1 domain in the interval 2–223; sequence KFAVIQFPGS…ASVLKNFVGK (222 aa). The Nucleophile role is filled by Cys86. Residues His195 and Glu197 contribute to the active site.

In terms of assembly, part of the FGAM synthase complex composed of 1 PurL, 1 PurQ and 2 PurS subunits.

It is found in the cytoplasm. It catalyses the reaction N(2)-formyl-N(1)-(5-phospho-beta-D-ribosyl)glycinamide + L-glutamine + ATP + H2O = 2-formamido-N(1)-(5-O-phospho-beta-D-ribosyl)acetamidine + L-glutamate + ADP + phosphate + H(+). The enzyme catalyses L-glutamine + H2O = L-glutamate + NH4(+). It participates in purine metabolism; IMP biosynthesis via de novo pathway; 5-amino-1-(5-phospho-D-ribosyl)imidazole from N(2)-formyl-N(1)-(5-phospho-D-ribosyl)glycinamide: step 1/2. Functionally, part of the phosphoribosylformylglycinamidine synthase complex involved in the purines biosynthetic pathway. Catalyzes the ATP-dependent conversion of formylglycinamide ribonucleotide (FGAR) and glutamine to yield formylglycinamidine ribonucleotide (FGAM) and glutamate. The FGAM synthase complex is composed of three subunits. PurQ produces an ammonia molecule by converting glutamine to glutamate. PurL transfers the ammonia molecule to FGAR to form FGAM in an ATP-dependent manner. PurS interacts with PurQ and PurL and is thought to assist in the transfer of the ammonia molecule from PurQ to PurL. This chain is Phosphoribosylformylglycinamidine synthase subunit PurQ, found in Lactococcus lactis subsp. lactis (strain IL1403) (Streptococcus lactis).